An 80-amino-acid polypeptide reads, in one-letter code: Defensin-like protein 14 (80 aa).

The first 29 residues, 1–29, serve as a signal peptide directing secretion; that stretch reads MAKSAAIITFLFAALVLFAAFEAPIMVEA. Gln30 carries the post-translational modification Pyrrolidone carboxylic acid. Cystine bridges form between Cys33/Cys80, Cys44/Cys65, Cys50/Cys74, and Cys54/Cys76.

This sequence belongs to the DEFL family.

It localises to the secreted. Functionally, confers broad-spectrum resistance to pathogens. Has antifungal activity in vitro. The sequence is that of Defensin-like protein 14 (PDF1.3) from Arabidopsis thaliana (Mouse-ear cress).